The primary structure comprises 156 residues: Small ribosomal subunit protein uS7 (156 aa).

Belongs to the universal ribosomal protein uS7 family. Part of the 30S ribosomal subunit. Contacts proteins S9 and S11.

Its function is as follows. One of the primary rRNA binding proteins, it binds directly to 16S rRNA where it nucleates assembly of the head domain of the 30S subunit. Is located at the subunit interface close to the decoding center, probably blocks exit of the E-site tRNA. The sequence is that of Small ribosomal subunit protein uS7 from Pseudomonas syringae pv. tomato (strain ATCC BAA-871 / DC3000).